A 358-amino-acid chain; its full sequence is 5-amino-6-(D-ribitylamino)uracil--L-tyrosine 4-hydroxyphenyl transferase 2 (358 aa).

A Radical SAM core domain is found at 45–292; that stretch reads VTFVKNTNIE…ESIKNIQAPR (248 aa). The [4Fe-4S] cluster site is built by C59, C63, and C66.

The protein belongs to the radical SAM superfamily. CofH family. Consists of two subunits, CofG and CofH. It depends on [4Fe-4S] cluster as a cofactor.

It carries out the reaction 5-amino-6-(D-ribitylamino)uracil + L-tyrosine + S-adenosyl-L-methionine = 5-amino-5-(4-hydroxybenzyl)-6-(D-ribitylimino)-5,6-dihydrouracil + 2-iminoacetate + 5'-deoxyadenosine + L-methionine + H(+). Its pathway is cofactor biosynthesis; coenzyme F0 biosynthesis. Catalyzes the radical-mediated synthesis of 5-amino-5-(4-hydroxybenzyl)-6-(D-ribitylimino)-5,6-dihydrouracil from 5-amino-6-(D-ribitylamino)uracil and L-tyrosine. This chain is 5-amino-6-(D-ribitylamino)uracil--L-tyrosine 4-hydroxyphenyl transferase 2, found in Methanococcus maripaludis (strain DSM 14266 / JCM 13030 / NBRC 101832 / S2 / LL).